A 304-amino-acid polypeptide reads, in one-letter code: Putative metal ion transporter ZIPCO (304 aa).

The next 8 helical transmembrane spans lie at 1–21 (MWLK…VIYL), 46–66 (VASG…VIGL), 74–94 (IYCC…TDIL), 158–178 (FFIV…IGSL), 183–203 (PIII…LMIY), 218–238 (IYAW…VLSF), 243–263 (FVEI…SFNM), and 275–295 (FYIS…MIVF).

Its subcellular location is the cell membrane. In terms of biological role, putative transporter for the divalent zinc and iron cations. Required for the development of liver-stage parasites. This is Putative metal ion transporter ZIPCO from Plasmodium berghei (strain Anka).